The sequence spans 648 residues: Threonine--tRNA ligase (648 aa).

One can recognise a TGS domain in the interval 1 to 61 (MIKITFPNTS…NENASVKLYK (61 aa)). The catalytic stretch occupies residues 243–542 (DHRRIGKEME…MIEHTGGKFP (300 aa)). Residues Cys338, His389, and His519 each contribute to the Zn(2+) site.

The protein belongs to the class-II aminoacyl-tRNA synthetase family. As to quaternary structure, homodimer. The cofactor is Zn(2+).

It localises to the cytoplasm. It carries out the reaction tRNA(Thr) + L-threonine + ATP = L-threonyl-tRNA(Thr) + AMP + diphosphate + H(+). Catalyzes the attachment of threonine to tRNA(Thr) in a two-step reaction: L-threonine is first activated by ATP to form Thr-AMP and then transferred to the acceptor end of tRNA(Thr). Also edits incorrectly charged L-seryl-tRNA(Thr). This Azobacteroides pseudotrichonymphae genomovar. CFP2 protein is Threonine--tRNA ligase.